Consider the following 54-residue polypeptide: Sec-independent protein translocase protein TatA (54 aa).

The chain crosses the membrane as a helical span at residues 1–21 (MGMSFSHLLIVLLIIFVLFGA).

The protein belongs to the TatA/E family. As to quaternary structure, the Tat system comprises two distinct complexes: a TatABC complex, containing multiple copies of TatA, TatB and TatC subunits, and a separate TatA complex, containing only TatA subunits. Substrates initially bind to the TatABC complex, which probably triggers association of the separate TatA complex to form the active translocon.

It is found in the cell inner membrane. Part of the twin-arginine translocation (Tat) system that transports large folded proteins containing a characteristic twin-arginine motif in their signal peptide across membranes. TatA could form the protein-conducting channel of the Tat system. The polypeptide is Sec-independent protein translocase protein TatA (Rickettsia canadensis (strain McKiel)).